A 146-amino-acid chain; its full sequence is uncharacterized protein (146 aa).

The protein to E.coli YmfS.

This is an uncharacterized protein from Escherichia coli (strain K12).